The chain runs to 202 residues: Na(+)-translocating NADH-quinone reductase subunit E (202 aa).

6 helical membrane passes run 11–31 (AVFI…FLAV), 35–55 (VTTS…SVPV), 81–101 (FLRF…LEMA), 114–134 (GIFL…SFMV), 144–164 (VVYG…LAGI), and 180–200 (LGIT…FSGI).

The protein belongs to the NqrDE/RnfAE family. As to quaternary structure, composed of six subunits; NqrA, NqrB, NqrC, NqrD, NqrE and NqrF.

Its subcellular location is the cell inner membrane. It carries out the reaction a ubiquinone + n Na(+)(in) + NADH + H(+) = a ubiquinol + n Na(+)(out) + NAD(+). Its function is as follows. NQR complex catalyzes the reduction of ubiquinone-1 to ubiquinol by two successive reactions, coupled with the transport of Na(+) ions from the cytoplasm to the periplasm. NqrA to NqrE are probably involved in the second step, the conversion of ubisemiquinone to ubiquinol. This is Na(+)-translocating NADH-quinone reductase subunit E from Pseudoalteromonas translucida (strain TAC 125).